The following is a 227-amino-acid chain: Fibrillarin-like rRNA/tRNA 2'-O-methyltransferase (227 aa).

S-adenosyl-L-methionine is bound by residues Thr-86 to Thr-87, Glu-105 to Phe-106, Asp-130 to Ala-131, and Asp-150 to Gln-153.

This sequence belongs to the methyltransferase superfamily. Fibrillarin family. Interacts with nop5. Component of box C/D small ribonucleoprotein (sRNP) particles that contain rpl7ae, FlpA and nop5, plus a guide RNA.

Its function is as follows. Involved in pre-rRNA and tRNA processing. Utilizes the methyl donor S-adenosyl-L-methionine to catalyze the site-specific 2'-hydroxyl methylation of ribose moieties in rRNA and tRNA. Site specificity is provided by a guide RNA that base pairs with the substrate. Methylation occurs at a characteristic distance from the sequence involved in base pairing with the guide RNA. The polypeptide is Fibrillarin-like rRNA/tRNA 2'-O-methyltransferase (Pyrococcus abyssi (strain GE5 / Orsay)).